The following is a 332-amino-acid chain: Ubiquinol oxidase 1a, mitochondrial (332 aa).

A mitochondrion-targeting transit peptide spans 1 to 54 (MSSRMAGSAILRHVGGVRLFTASATSPAAAAAAAARPFLAGGEAVPGVWGLRLM). A helical membrane pass occupies residues 157-177 (AMMLETVAAVPGMVGGMLLHL). Fe cation is bound by residues Glu-161, Glu-200, and His-203. The chain crosses the membrane as a helical span at residues 219–239 (ALVITVQGVFFNAYFLGYLLS). Fe cation is bound by residues Glu-251, Glu-302, and His-305.

The protein belongs to the alternative oxidase family. As to quaternary structure, homodimer; disulfide-linked. Fe cation serves as cofactor. In terms of tissue distribution, expressed in roots, leaf sheaths and leaf blades.

It localises to the mitochondrion inner membrane. It carries out the reaction 2 a ubiquinol + O2 = 2 a ubiquinone + 2 H2O. Functionally, catalyzes the cyanide-resistant oxidation of ubiquinol and the reduction of molecular oxygen to water, but does not translocate protons and consequently is not linked to oxidative phosphorylation. May increase respiration when the cytochrome respiratory pathway is restricted, or in response to low temperatures. This Oryza sativa subsp. japonica (Rice) protein is Ubiquinol oxidase 1a, mitochondrial.